The chain runs to 250 residues: MYKLVLVRHGESEWNKENLFTGWTDVKLSEKGVSEACEGGRILKEEGYSFDIAFSSMLVRANDTLNIILCELGQSYIDVEKSWRLNERHYGALQGLNKAETAEKYGEDKVLIWRRSYNVPPMPLDESDKRHPIHDSRYKNIPKSELPSTECLKDTVARVIPYWTDKIAKAILEGKRVIVAAHGNSLRALVKYLDNMSEEDILKLNIPTGIPLVYELDKNLKPVKHYYLGDEDKIKAAMESVANQGKKIDR.

Residues 8–15, 21–22, arginine 60, 87–90, lysine 98, 114–115, and 183–184 each bind substrate; these read RHGESEWN, TG, ERHY, RR, and GN. Histidine 9 functions as the Tele-phosphohistidine intermediate in the catalytic mechanism. Residue glutamate 87 is the Proton donor/acceptor of the active site.

Belongs to the phosphoglycerate mutase family. BPG-dependent PGAM subfamily.

It carries out the reaction (2R)-2-phosphoglycerate = (2R)-3-phosphoglycerate. It functions in the pathway carbohydrate degradation; glycolysis; pyruvate from D-glyceraldehyde 3-phosphate: step 3/5. In terms of biological role, catalyzes the interconversion of 2-phosphoglycerate and 3-phosphoglycerate. The protein is 2,3-bisphosphoglycerate-dependent phosphoglycerate mutase of Borrelia duttonii (strain Ly).